Here is a 156-residue protein sequence, read N- to C-terminus: Probable histone H2A.6 (156 aa).

Disordered regions lie at residues M1–V26 and K129–S156. The span at A9–V26 shows a compositional bias: basic residues. The span at K130–A147 shows a compositional bias: basic and acidic residues. The SPKK motif signature appears at S149 to K152.

Belongs to the histone H2A family. The nucleosome is a histone octamer containing two molecules each of H2A, H2B, H3 and H4 assembled in one H3-H4 heterotetramer and two H2A-H2B heterodimers. The octamer wraps approximately 147 bp of DNA.

It is found in the nucleus. The protein localises to the chromosome. Its function is as follows. Core component of nucleosome. Nucleosomes wrap and compact DNA into chromatin, limiting DNA accessibility to the cellular machineries which require DNA as a template. Histones thereby play a central role in transcription regulation, DNA repair, DNA replication and chromosomal stability. DNA accessibility is regulated via a complex set of post-translational modifications of histones, also called histone code, and nucleosome remodeling. This is Probable histone H2A.6 from Oryza sativa subsp. indica (Rice).